A 471-amino-acid chain; its full sequence is Trigger factor (471 aa).

The 88-residue stretch at 174–261 folds into the PPIase FKBP-type domain; the sequence is GDVAVVSFEG…VKDLKTRELP (88 aa). Residues 436 to 446 are compositionally biased toward polar residues; the sequence is ETLPKTKSLNG. Residues 436–471 are disordered; that stretch reads ETLPKTKSLNGKPSTQGKTSQSKSKKTKTKVEKTTK. Low complexity predominate over residues 447–457; it reads KPSTQGKTSQS.

This sequence belongs to the FKBP-type PPIase family. Tig subfamily.

The protein localises to the cytoplasm. The catalysed reaction is [protein]-peptidylproline (omega=180) = [protein]-peptidylproline (omega=0). In terms of biological role, involved in protein export. Acts as a chaperone by maintaining the newly synthesized protein in an open conformation. Functions as a peptidyl-prolyl cis-trans isomerase. In Prochlorococcus marinus (strain MIT 9211), this protein is Trigger factor.